The primary structure comprises 70 residues: Cold shock-like protein CspG (70 aa).

The CSD domain occupies 7 to 67; that stretch reads GLVKWFNADK…GQRGPAAANV (61 aa).

The protein localises to the cytoplasm. This is Cold shock-like protein CspG (cspG) from Escherichia coli O157:H7.